Here is a 443-residue protein sequence, read N- to C-terminus: Xaa-Pro dipeptidase (443 aa).

5 residues coordinate Mn(2+): Asp246, Asp257, His339, Glu384, and Glu423.

The protein belongs to the peptidase M24B family. Bacterial-type prolidase subfamily. The cofactor is Mn(2+).

The enzyme catalyses Xaa-L-Pro dipeptide + H2O = an L-alpha-amino acid + L-proline. Splits dipeptides with a prolyl residue in the C-terminal position. This Erwinia tasmaniensis (strain DSM 17950 / CFBP 7177 / CIP 109463 / NCPPB 4357 / Et1/99) protein is Xaa-Pro dipeptidase.